The sequence spans 168 residues: Photosystem I assembly protein Ycf3 (168 aa).

TPR repeat units lie at residues 35–68 (AFTY…EIDP), 72–105 (SYIL…NPFL), and 120–153 (GEQA…TPGN).

This sequence belongs to the Ycf3 family.

The protein localises to the plastid. Its subcellular location is the chloroplast thylakoid membrane. Its function is as follows. Essential for the assembly of the photosystem I (PSI) complex. May act as a chaperone-like factor to guide the assembly of the PSI subunits. In Atropa belladonna (Belladonna), this protein is Photosystem I assembly protein Ycf3.